Here is a 296-residue protein sequence, read N- to C-terminus: MFGAFVSHRLWSDSGCTTTCITNSIANYVAFGEQIGFPFKSAQVFIAGPRKAVINIQEDDKVELLKMIVKHNLWVVAHGTYLDVPWSRRSAFVTHFIQQELLICKEVGIKGLVLHLGAVEPELIVEGLKKIKPVEGVVIYLETPHNKHHTYKYSTMEQIKELFLRIRNTRLKQIGLCIDTAHIWSSGVNISSYNDAGQWLRSLENIHSVIPPSHIMFHLNDAATECGSGIDRHASLFEGMIWKSYSHKIKQSGLYCFVEYITRHQCPAILERNLGSSMQLQTALTAEFTTLKSLLK.

A disulfide bridge connects residues C16 and C20. Residues H78, H115, E142, H182, H218, D231, H233, and E271 each coordinate Zn(2+).

It belongs to the AP endonuclease 2 family. Requires Zn(2+) as cofactor.

It localises to the host nucleus. Its subcellular location is the host cytoplasm. The protein localises to the virion. Endonuclease that plays a role in DNA repair. Cleaves phosphodiester bonds on the 5' side of apurinic or apyrimidinic sites (AP sites). In addition to endonuclease activity, the ASFV enzyme has a proofreading 3'-5' exonuclease activity that is considerably more efficient in the elimination of a mismatch than in that of a correctly paired base. Displays 3'-phosphatase and 3'-repair diesterase activities. The single nucleotide gaps generated by the AP endonuclease are filled by the viral AP endonuclease and DNA ligase. The sequence is that of Probable AP endonuclease from Ornithodoros (relapsing fever ticks).